We begin with the raw amino-acid sequence, 820 residues long: Penicillin-binding protein 1A (820 aa).

A disordered region spans residues 1 to 120; that stretch reads MNSDGRHHQS…PAGRLPQPRV (120 aa). Over residues 41-53 the composition is skewed to basic and acidic residues; it reads TDDRSAPHADSIE. Residues 139–159 traverse the membrane as a helical segment; it reads LTAAVVILLPMVTFTMAYLIV. The interval 180–360 is transglycosylase; the sequence is GSEIAKIVPP…RWNWVLDGMV (181 aa). Catalysis depends on glutamate 213, which acts as the Proton donor; for transglycosylase activity. The segment at 453–743 is transpeptidase; it reads AVVSIDPHNG…PSDIWKATMD (291 aa). Serine 487 acts as the Acyl-ester intermediate; for transpeptidase activity in catalysis. Positions 792–804 are enriched in low complexity; the sequence is ITIPIGPPTTITL. Residues 792 to 820 form a disordered region; it reads ITIPIGPPTTITLAPPPPAPPAATPTPPP. Pro residues predominate over residues 805-820; it reads APPPPAPPAATPTPPP.

This sequence in the N-terminal section; belongs to the glycosyltransferase 51 family. It in the C-terminal section; belongs to the transpeptidase family. As to quaternary structure, interacts with RipA via its transpeptidase domain (residues 561-820).

The protein localises to the cell membrane. The catalysed reaction is [GlcNAc-(1-&gt;4)-Mur2Ac(oyl-L-Ala-gamma-D-Glu-L-Lys-D-Ala-D-Ala)](n)-di-trans,octa-cis-undecaprenyl diphosphate + beta-D-GlcNAc-(1-&gt;4)-Mur2Ac(oyl-L-Ala-gamma-D-Glu-L-Lys-D-Ala-D-Ala)-di-trans,octa-cis-undecaprenyl diphosphate = [GlcNAc-(1-&gt;4)-Mur2Ac(oyl-L-Ala-gamma-D-Glu-L-Lys-D-Ala-D-Ala)](n+1)-di-trans,octa-cis-undecaprenyl diphosphate + di-trans,octa-cis-undecaprenyl diphosphate + H(+). It catalyses the reaction Preferential cleavage: (Ac)2-L-Lys-D-Ala-|-D-Ala. Also transpeptidation of peptidyl-alanyl moieties that are N-acyl substituents of D-alanine.. The protein operates within cell wall biogenesis; peptidoglycan biosynthesis. Cell wall formation. Synthesis of cross-linked peptidoglycan from the lipid intermediates. The enzyme has a penicillin-insensitive transglycosylase N-terminal domain (formation of linear glycan strands) and a penicillin-sensitive transpeptidase C-terminal domain (cross-linking of the peptide subunits). Has little peptidoglycan hydrolytic activity; however it inhibits the synergistic peptidoglycan hydrolysis of RipA plus RpfB. The protein is Penicillin-binding protein 1A (ponA1) of Mycobacterium tuberculosis (strain ATCC 25618 / H37Rv).